The following is a 134-amino-acid chain: Histone H2B (134 aa).

A compositionally biased stretch (polar residues) spans 1-10 (MSDKASTPKK). 2 disordered regions span residues 1-29 (MSDK…EAKK) and 113-134 (VSEG…SKSR). The span at 12–29 (ATKDATKPKKVGDEEAKK) shows a compositional bias: basic and acidic residues. Over residues 125–134 (GQPTSGSKSR) the composition is skewed to polar residues.

This sequence belongs to the histone H2B family. As to quaternary structure, the nucleosome is a histone octamer containing two molecules each of H2A, H2B, H3 and H4 assembled in one H3-H4 heterotetramer and two H2A-H2B heterodimers. The octamer wraps approximately 147 bp of DNA.

The protein localises to the nucleus. It is found in the chromosome. Its function is as follows. Core component of nucleosome. Nucleosomes wrap and compact DNA into chromatin, limiting DNA accessibility to the cellular machineries which require DNA as a template. Histones thereby play a central role in transcription regulation, DNA repair, DNA replication and chromosomal stability. DNA accessibility is regulated via a complex set of post-translational modifications of histones, also called histone code, and nucleosome remodeling. The protein is Histone H2B of Entamoeba invadens.